The following is a 64-amino-acid chain: Defensin-like protein 123 (64 aa).

4 disulfides stabilise this stretch: Cys19–Cys62, Cys29–Cys49, Cys34–Cys56, and Cys38–Cys58.

It belongs to the DEFL family.

This is Defensin-like protein 123 from Arabidopsis thaliana (Mouse-ear cress).